A 329-amino-acid chain; its full sequence is Malate dehydrogenase (329 aa).

Position 12–18 (G12–G18) interacts with NAD(+). Positions 93 and 99 each coordinate substrate. Residues N106, Q113, and T130–N132 contribute to the NAD(+) site. Substrate contacts are provided by N132 and R163. H188 acts as the Proton acceptor in catalysis.

The protein belongs to the LDH/MDH superfamily. MDH type 2 family.

The catalysed reaction is (S)-malate + NAD(+) = oxaloacetate + NADH + H(+). Catalyzes the reversible oxidation of malate to oxaloacetate. This chain is Malate dehydrogenase, found in Mycolicibacterium paratuberculosis (strain ATCC BAA-968 / K-10) (Mycobacterium paratuberculosis).